The sequence spans 463 residues: uncharacterized protein (463 aa).

This sequence belongs to the UbiD family.

This is an uncharacterized protein from Rhodospirillum rubrum.